The chain runs to 324 residues: Glyoxylate/hydroxypyruvate reductase B (324 aa).

Active-site residues include arginine 237 and glutamate 266. The active-site Proton donor is histidine 285.

This sequence belongs to the D-isomer specific 2-hydroxyacid dehydrogenase family. GhrB subfamily. As to quaternary structure, homodimer.

It localises to the cytoplasm. The enzyme catalyses glycolate + NADP(+) = glyoxylate + NADPH + H(+). It carries out the reaction (R)-glycerate + NAD(+) = 3-hydroxypyruvate + NADH + H(+). The catalysed reaction is (R)-glycerate + NADP(+) = 3-hydroxypyruvate + NADPH + H(+). Functionally, catalyzes the NADPH-dependent reduction of glyoxylate and hydroxypyruvate into glycolate and glycerate, respectively. The sequence is that of Glyoxylate/hydroxypyruvate reductase B from Escherichia coli O6:H1 (strain CFT073 / ATCC 700928 / UPEC).